Consider the following 682-residue polypeptide: Potassium-transporting ATPase ATP-binding subunit (682 aa).

The next 4 helical transmembrane spans lie at 34–54 (PVMF…IAMA), 62–82 (ALFS…ANFA), 219–239 (IALT…TATL), and 254–274 (VLVA…LSAI). D307 serves as the catalytic 4-aspartylphosphate intermediate. Residues D344, E348, 377-384 (FTAQSRMS), and K395 each bind ATP. Mg(2+) contacts are provided by D518 and D522. Transmembrane regions (helical) follow at residues 588–608 (FAII…LNIM), 616–636 (AILS…PLAL), and 656–676 (IYGL…DLLL).

This sequence belongs to the cation transport ATPase (P-type) (TC 3.A.3) family. Type IA subfamily. As to quaternary structure, the system is composed of three essential subunits: KdpA, KdpB and KdpC.

The protein resides in the cell inner membrane. The enzyme catalyses K(+)(out) + ATP + H2O = K(+)(in) + ADP + phosphate + H(+). Functionally, part of the high-affinity ATP-driven potassium transport (or Kdp) system, which catalyzes the hydrolysis of ATP coupled with the electrogenic transport of potassium into the cytoplasm. This subunit is responsible for energy coupling to the transport system and for the release of the potassium ions to the cytoplasm. The protein is Potassium-transporting ATPase ATP-binding subunit of Escherichia fergusonii (strain ATCC 35469 / DSM 13698 / CCUG 18766 / IAM 14443 / JCM 21226 / LMG 7866 / NBRC 102419 / NCTC 12128 / CDC 0568-73).